Consider the following 469-residue polypeptide: 1-aminocyclopropane-1-carboxylate synthase 8 (469 aa).

Glu47 and Tyr85 together coordinate substrate. The residue at position 272 (Lys272) is an N6-(pyridoxal phosphate)lysine.

Belongs to the class-I pyridoxal-phosphate-dependent aminotransferase family. Homodimer and heterodimer. In vivo, the relevance of heterodimerization with other ACS enzymes is however unsure. Interacts with GRF3. Pyridoxal 5'-phosphate serves as cofactor. Post-translationally, may be processed at its C-terminus. Expressed in roots. Expressed at low level in flowers and siliques.

The catalysed reaction is S-adenosyl-L-methionine = 1-aminocyclopropane-1-carboxylate + S-methyl-5'-thioadenosine + H(+). It participates in alkene biosynthesis; ethylene biosynthesis via S-adenosyl-L-methionine; ethylene from S-adenosyl-L-methionine: step 1/2. In terms of biological role, 1-aminocyclopropane-1-carboxylate synthase (ACS) enzymes catalyze the conversion of S-adenosyl-L-methionine (SAM) into 1-aminocyclopropane-1-carboxylate (ACC), a direct precursor of ethylene. The protein is 1-aminocyclopropane-1-carboxylate synthase 8 (ACS8) of Arabidopsis thaliana (Mouse-ear cress).